The sequence spans 459 residues: Cysteine--tRNA ligase (459 aa).

Cys-27 is a binding site for Zn(2+). The short motif at 29 to 39 is the 'HIGH' region element; the sequence is PTVYDDAHLGH. Residues Cys-202, His-231, and Glu-235 each coordinate Zn(2+). Positions 263-267 match the 'KMSKS' region motif; the sequence is KMSKS. Residue Lys-266 participates in ATP binding.

It belongs to the class-I aminoacyl-tRNA synthetase family. In terms of assembly, monomer. Zn(2+) serves as cofactor.

It is found in the cytoplasm. The enzyme catalyses tRNA(Cys) + L-cysteine + ATP = L-cysteinyl-tRNA(Cys) + AMP + diphosphate. The chain is Cysteine--tRNA ligase from Campylobacter fetus subsp. fetus (strain 82-40).